The chain runs to 484 residues: Protein nucleotidyltransferase YdiU (484 aa).

Residues G81, G83, R84, K103, D115, G116, R166, and R173 each contribute to the ATP site. The Proton acceptor role is filled by D244. Residues N245 and D254 each coordinate Mg(2+). D254 serves as a coordination point for ATP.

Belongs to the SELO family. Mg(2+) serves as cofactor. It depends on Mn(2+) as a cofactor.

The catalysed reaction is L-seryl-[protein] + ATP = 3-O-(5'-adenylyl)-L-seryl-[protein] + diphosphate. It catalyses the reaction L-threonyl-[protein] + ATP = 3-O-(5'-adenylyl)-L-threonyl-[protein] + diphosphate. The enzyme catalyses L-tyrosyl-[protein] + ATP = O-(5'-adenylyl)-L-tyrosyl-[protein] + diphosphate. It carries out the reaction L-histidyl-[protein] + UTP = N(tele)-(5'-uridylyl)-L-histidyl-[protein] + diphosphate. The catalysed reaction is L-seryl-[protein] + UTP = O-(5'-uridylyl)-L-seryl-[protein] + diphosphate. It catalyses the reaction L-tyrosyl-[protein] + UTP = O-(5'-uridylyl)-L-tyrosyl-[protein] + diphosphate. Its function is as follows. Nucleotidyltransferase involved in the post-translational modification of proteins. It can catalyze the addition of adenosine monophosphate (AMP) or uridine monophosphate (UMP) to a protein, resulting in modifications known as AMPylation and UMPylation. In Shewanella sp. (strain MR-4), this protein is Protein nucleotidyltransferase YdiU.